Consider the following 411-residue polypeptide: Efflux pump periplasmic linker BepF (411 aa).

Residues 118 to 196 (FVLQKDALQA…SLEQAQINLG (79 aa)) adopt a coiled-coil conformation.

It belongs to the membrane fusion protein (MFP) (TC 8.A.1) family. Probably part of a tripartite efflux pump, which is composed of an outer membrane efflux protein, an inner membrane protein and a protein that expands the periplasmic space. Could form a tripartite pump with BepC and BepG.

The protein localises to the periplasm. Functionally, may contribute to resistance to some drugs, such as deoxycholate, sodium dodecyl sulfate and nalidixic acid, in the absence of BepD and BepE. This is Efflux pump periplasmic linker BepF (bepF) from Brucella suis biovar 1 (strain 1330).